A 401-amino-acid polypeptide reads, in one-letter code: Argininosuccinate synthase (401 aa).

Ala-9–Ser-17 provides a ligand contact to ATP. Tyr-88 provides a ligand contact to L-citrulline. Gly-118 provides a ligand contact to ATP. L-aspartate contacts are provided by Thr-120, Asn-124, and Asp-125. Residue Asn-124 coordinates L-citrulline. Residues Arg-128, Ser-177, Ser-186, Glu-262, and Tyr-274 each contribute to the L-citrulline site.

Belongs to the argininosuccinate synthase family. Type 1 subfamily. As to quaternary structure, homotetramer.

The protein resides in the cytoplasm. It carries out the reaction L-citrulline + L-aspartate + ATP = 2-(N(omega)-L-arginino)succinate + AMP + diphosphate + H(+). It participates in amino-acid biosynthesis; L-arginine biosynthesis; L-arginine from L-ornithine and carbamoyl phosphate: step 2/3. The protein is Argininosuccinate synthase of Chlorobaculum tepidum (strain ATCC 49652 / DSM 12025 / NBRC 103806 / TLS) (Chlorobium tepidum).